A 258-amino-acid polypeptide reads, in one-letter code: Mediator of RNA polymerase II transcription subunit 18 (258 aa).

Belongs to the Mediator complex subunit 18 family. As to quaternary structure, component of the Mediator complex.

The protein localises to the nucleus. Its function is as follows. Component of the Mediator complex, a coactivator involved in the regulated transcription of nearly all RNA polymerase II-dependent genes. Mediator functions as a bridge to convey information from gene-specific regulatory proteins to the basal RNA polymerase II transcription machinery. Mediator is recruited to promoters by direct interactions with regulatory proteins and serves as a scaffold for the assembly of a functional preinitiation complex with RNA polymerase II and the general transcription factors. This chain is Mediator of RNA polymerase II transcription subunit 18 (SRB5), found in Eremothecium gossypii (strain ATCC 10895 / CBS 109.51 / FGSC 9923 / NRRL Y-1056) (Yeast).